The sequence spans 432 residues: D-amino acid dehydrogenase (432 aa).

3-17 (VVILGSGVVGVASAW) contributes to the FAD binding site.

Belongs to the DadA oxidoreductase family. FAD is required as a cofactor.

It catalyses the reaction a D-alpha-amino acid + A + H2O = a 2-oxocarboxylate + AH2 + NH4(+). It participates in amino-acid degradation; D-alanine degradation; NH(3) and pyruvate from D-alanine: step 1/1. In terms of biological role, oxidative deamination of D-amino acids. This is D-amino acid dehydrogenase from Escherichia coli O127:H6 (strain E2348/69 / EPEC).